Consider the following 394-residue polypeptide: Nicotinate phosphoribosyltransferase (394 aa).

The residue at position 218 (histidine 218) is a Phosphohistidine; by autocatalysis.

This sequence belongs to the NAPRTase family. Post-translationally, transiently phosphorylated on a His residue during the reaction cycle. Phosphorylation strongly increases the affinity for substrates and increases the rate of nicotinate D-ribonucleotide production. Dephosphorylation regenerates the low-affinity form of the enzyme, leading to product release.

The catalysed reaction is nicotinate + 5-phospho-alpha-D-ribose 1-diphosphate + ATP + H2O = nicotinate beta-D-ribonucleotide + ADP + phosphate + diphosphate. Its pathway is cofactor biosynthesis; NAD(+) biosynthesis; nicotinate D-ribonucleotide from nicotinate: step 1/1. Catalyzes the synthesis of beta-nicotinate D-ribonucleotide from nicotinate and 5-phospho-D-ribose 1-phosphate at the expense of ATP. In Xylella fastidiosa (strain 9a5c), this protein is Nicotinate phosphoribosyltransferase.